Here is a 583-residue protein sequence, read N- to C-terminus: Aspartate--tRNA ligase (583 aa).

Glu-174 lines the L-aspartate pocket. Positions Gln-198–Lys-201 are aspartate. Arg-220 is an L-aspartate binding site. Residues Arg-220–Glu-222 and Gln-229 each bind ATP. Residue His-443 participates in L-aspartate binding. ATP is bound at residue Glu-477. Residue Arg-484 coordinates L-aspartate. Gly-529–Arg-532 lines the ATP pocket.

It belongs to the class-II aminoacyl-tRNA synthetase family. Type 1 subfamily. In terms of assembly, homodimer.

The protein localises to the cytoplasm. It catalyses the reaction tRNA(Asp) + L-aspartate + ATP = L-aspartyl-tRNA(Asp) + AMP + diphosphate. Functionally, catalyzes the attachment of L-aspartate to tRNA(Asp) in a two-step reaction: L-aspartate is first activated by ATP to form Asp-AMP and then transferred to the acceptor end of tRNA(Asp). The sequence is that of Aspartate--tRNA ligase from Streptococcus thermophilus (strain ATCC BAA-250 / LMG 18311).